The following is a 232-amino-acid chain: MNRYTLKEIEENLGVFFNNHTLLKTALTHSSFGNQFKDAEYNERLEFLGDSVLQLCITEYLFNNYKHKTEGELTKIRSLIVCENSLYEIAKKINLGSYIRMSKGEEITGGRERISIQADAVEAIIAAVYLDKGIGFVRDFILLHFEEIINKAINNEIVLDFKTKLQELLQKDGEVVIQYELTKFEGPPHRRKFFTNVVIDKKLMGEGSGYSKKEAEQNAAKQALDILEGKHE.

An RNase III domain is found at 6 to 133; that stretch reads LKEIEENLGV…IIAAVYLDKG (128 aa). Glutamate 46 contacts Mg(2+). Aspartate 50 is a catalytic residue. Residues aspartate 119 and glutamate 122 each coordinate Mg(2+). The active site involves glutamate 122. A DRBM domain is found at 160 to 229; the sequence is DFKTKLQELL…AKQALDILEG (70 aa).

This sequence belongs to the ribonuclease III family. As to quaternary structure, homodimer. The cofactor is Mg(2+).

The protein resides in the cytoplasm. The catalysed reaction is Endonucleolytic cleavage to 5'-phosphomonoester.. Functionally, digests double-stranded RNA. Involved in the processing of primary rRNA transcript to yield the immediate precursors to the large and small rRNAs (23S and 16S). Processes some mRNAs, and tRNAs when they are encoded in the rRNA operon. Processes pre-crRNA and tracrRNA of type II CRISPR loci if present in the organism. The sequence is that of Ribonuclease 3 from Clostridium beijerinckii (strain ATCC 51743 / NCIMB 8052) (Clostridium acetobutylicum).